A 360-amino-acid chain; its full sequence is UDP-N-acetylglucosamine--N-acetylmuramyl-(pentapeptide) pyrophosphoryl-undecaprenol N-acetylglucosamine transferase (360 aa).

Residues 12–14 (TAG), serine 198, and glutamine 289 each bind UDP-N-acetyl-alpha-D-glucosamine.

The protein belongs to the glycosyltransferase 28 family. MurG subfamily.

Its subcellular location is the cell membrane. The enzyme catalyses Mur2Ac(oyl-L-Ala-gamma-D-Glu-L-Lys-D-Ala-D-Ala)-di-trans,octa-cis-undecaprenyl diphosphate + UDP-N-acetyl-alpha-D-glucosamine = beta-D-GlcNAc-(1-&gt;4)-Mur2Ac(oyl-L-Ala-gamma-D-Glu-L-Lys-D-Ala-D-Ala)-di-trans,octa-cis-undecaprenyl diphosphate + UDP + H(+). Its pathway is cell wall biogenesis; peptidoglycan biosynthesis. Functionally, cell wall formation. Catalyzes the transfer of a GlcNAc subunit on undecaprenyl-pyrophosphoryl-MurNAc-pentapeptide (lipid intermediate I) to form undecaprenyl-pyrophosphoryl-MurNAc-(pentapeptide)GlcNAc (lipid intermediate II). The sequence is that of UDP-N-acetylglucosamine--N-acetylmuramyl-(pentapeptide) pyrophosphoryl-undecaprenol N-acetylglucosamine transferase from Streptococcus equi subsp. zooepidemicus (strain MGCS10565).